The sequence spans 280 residues: Inner membrane ABC transporter permease protein YcjP (280 aa).

The Cytoplasmic portion of the chain corresponds to 1 to 10; it reads MATNKRTLSR. Residues 11–31 traverse the membrane as a helical segment; that stretch reads IGFYCGLALFLIITLFPFFVM. Topologically, residues 32-53 are periplasmic; that stretch reads LMTSFKGAKEAISLHPTLLPQQ. A helical membrane pass occupies residues 54-74; the sequence is WTLEHYVDIFNPMIFPFVDYF. The 192-residue stretch at 74–265 folds into the ABC transmembrane type-1 domain; that stretch reads FRNSLVVSVV…LPVVIMYALS (192 aa). Over 75–77 the chain is Cytoplasmic; the sequence is RNS. A helical membrane pass occupies residues 78 to 98; that stretch reads LVVSVVSSVVAVFLGILGAYA. The Periplasmic segment spans residues 99 to 117; sequence LSRLRFKGRMTINASFYTV. Residues 118–138 traverse the membrane as a helical segment; the sequence is YMFSGILLVVPLFKIITALGI. Residues 139 to 140 are Cytoplasmic-facing; sequence YD. A helical transmembrane segment spans residues 141 to 161; that stretch reads TEMALIITMVTQTLPTAVFML. Residues 162-189 lie on the Periplasmic side of the membrane; sequence KSYFDTIPDEIEEAAMMDGLNRLQIIFR. The helical transmembrane segment at 190-210 threads the bilayer; the sequence is ITVPLAMSGLISVFVYCFMVA. Residues 211-214 are Cytoplasmic-facing; sequence WNDY. The helical transmembrane segment at 215–235 threads the bilayer; the sequence is LFASIFLSSASNFTLPVGLNA. Topologically, residues 236 to 242 are periplasmic; that stretch reads LFSTPDY. The helical transmembrane segment at 243–263 threads the bilayer; that stretch reads IWGRMMAASLVTALPVVIMYA. Residues 264–280 lie on the Cytoplasmic side of the membrane; that stretch reads LSERFIKSGLTAGGVKG.

Belongs to the binding-protein-dependent transport system permease family. MalFG subfamily.

It localises to the cell inner membrane. Its function is as follows. Probably part of the binding-protein-dependent transport system YcjNOP. Probably responsible for the translocation of the substrate across the membrane. In Escherichia coli (strain K12), this protein is Inner membrane ABC transporter permease protein YcjP (ycjP).